A 320-amino-acid polypeptide reads, in one-letter code: Homoserine kinase (320 aa).

Residue 100-110 (PLSSGMGSSAA) participates in ATP binding.

Belongs to the GHMP kinase family. Homoserine kinase subfamily.

It is found in the cytoplasm. The catalysed reaction is L-homoserine + ATP = O-phospho-L-homoserine + ADP + H(+). Its pathway is amino-acid biosynthesis; L-threonine biosynthesis; L-threonine from L-aspartate: step 4/5. Functionally, catalyzes the ATP-dependent phosphorylation of L-homoserine to L-homoserine phosphate. This is Homoserine kinase from Chlorobium phaeovibrioides (strain DSM 265 / 1930) (Prosthecochloris vibrioformis (strain DSM 265)).